The chain runs to 313 residues: tRNA pseudouridine synthase B (313 aa).

Asp42 functions as the Nucleophile in the catalytic mechanism.

Belongs to the pseudouridine synthase TruB family. Type 1 subfamily.

It carries out the reaction uridine(55) in tRNA = pseudouridine(55) in tRNA. In terms of biological role, responsible for synthesis of pseudouridine from uracil-55 in the psi GC loop of transfer RNAs. This is tRNA pseudouridine synthase B from Prochlorococcus marinus (strain SARG / CCMP1375 / SS120).